A 65-amino-acid polypeptide reads, in one-letter code: Protein C' (65 aa).

It belongs to the rhabdoviruses C protein family.

Seems to stimulates transcription by the viral polymerase. May play a role in viral pathogenesis or transmission by insects vectors. This chain is Protein C' (P), found in Aedes (Bovine).